The primary structure comprises 462 residues: A-type ATP synthase subunit B (462 aa).

It belongs to the ATPase alpha/beta chains family. Has multiple subunits with at least A(3), B(3), C, D, E, F, H, I and proteolipid K(x).

The protein resides in the cell membrane. Component of the A-type ATP synthase that produces ATP from ADP in the presence of a proton gradient across the membrane. The B chain is a regulatory subunit. The chain is A-type ATP synthase subunit B from Methanococcus maripaludis (strain C6 / ATCC BAA-1332).